The chain runs to 364 residues: DNA replication and repair protein RecF (364 aa).

30 to 37 (GNNAQGKT) is an ATP binding site.

It belongs to the RecF family.

It is found in the cytoplasm. Functionally, the RecF protein is involved in DNA metabolism; it is required for DNA replication and normal SOS inducibility. RecF binds preferentially to single-stranded, linear DNA. It also seems to bind ATP. This Clostridium botulinum (strain ATCC 19397 / Type A) protein is DNA replication and repair protein RecF.